A 533-amino-acid polypeptide reads, in one-letter code: Retinoid isomerohydrolase (533 aa).

S2 carries the N-acetylserine modification. C112 carries S-palmitoyl cysteine; in membrane form lipidation. Residue H180 participates in Fe cation binding. Residue C231 is the site of S-palmitoyl cysteine; in membrane form attachment. Fe cation contacts are provided by H241 and H313. S-palmitoyl cysteine; in membrane form attachment occurs at residues C329 and C330. H527 contributes to the Fe cation binding site.

Belongs to the carotenoid oxygenase family. Requires Fe(2+) as cofactor. Palmitoylation by LRAT regulates ligand binding specificity; the palmitoylated form (membrane form) specifically binds all-trans-retinyl-palmitate, while the soluble unpalmitoylated form binds all-trans-retinol (vitamin A). Retinal pigment epithelium specific.

It localises to the cell membrane. It carries out the reaction an all-trans-retinyl ester + H2O = 11-cis-retinol + a fatty acid + H(+). It catalyses the reaction lutein = (3R,3'S)-zeaxanthin. The catalysed reaction is all-trans-retinyl hexadecanoate + H2O = 11-cis-retinol + hexadecanoate + H(+). Functionally, critical isomerohydrolase in the retinoid cycle involved in regeneration of 11-cis-retinal, the chromophore of rod and cone opsins. Catalyzes the cleavage and isomerization of all-trans-retinyl fatty acid esters to 11-cis-retinol which is further oxidized by 11-cis retinol dehydrogenase to 11-cis-retinal for use as visual chromophore. Essential for the production of 11-cis retinal for both rod and cone photoreceptors. Also capable of catalyzing the isomerization of lutein to meso-zeaxanthin an eye-specific carotenoid. The soluble form binds vitamin A (all-trans-retinol), making it available for LRAT processing to all-trans-retinyl ester. The membrane form, palmitoylated by LRAT, binds all-trans-retinyl esters, making them available for IMH (isomerohydrolase) processing to all-cis-retinol. The soluble form is regenerated by transferring its palmitoyl groups onto 11-cis-retinol, a reaction catalyzed by LRAT. This chain is Retinoid isomerohydrolase (RPE65), found in Cynops pyrrhogaster (Japanese fire-bellied newt).